A 93-amino-acid chain; its full sequence is Small ribosomal subunit protein uS19 (93 aa).

It belongs to the universal ribosomal protein uS19 family.

Protein S19 forms a complex with S13 that binds strongly to the 16S ribosomal RNA. The polypeptide is Small ribosomal subunit protein uS19 (Lawsonia intracellularis (strain PHE/MN1-00)).